Here is a 279-residue protein sequence, read N- to C-terminus: Pantothenate synthetase (279 aa).

An ATP-binding site is contributed by 26–33; it reads MGNLHEGH. His-33 serves as the catalytic Proton donor. Gln-57 is a binding site for (R)-pantoate. Gln-57 is a beta-alanine binding site. Position 144–147 (144–147) interacts with ATP; sequence GKKD. Position 150 (Gln-150) interacts with (R)-pantoate. ATP-binding positions include Val-173 and 181–184; that span reads LSSR.

It belongs to the pantothenate synthetase family. In terms of assembly, homodimer.

It localises to the cytoplasm. It catalyses the reaction (R)-pantoate + beta-alanine + ATP = (R)-pantothenate + AMP + diphosphate + H(+). It functions in the pathway cofactor biosynthesis; (R)-pantothenate biosynthesis; (R)-pantothenate from (R)-pantoate and beta-alanine: step 1/1. Its function is as follows. Catalyzes the condensation of pantoate with beta-alanine in an ATP-dependent reaction via a pantoyl-adenylate intermediate. The protein is Pantothenate synthetase of Burkholderia cenocepacia (strain HI2424).